Reading from the N-terminus, the 237-residue chain is Adenosine 5'-phosphosulfate reductase (237 aa).

The [4Fe-4S] cluster site is built by Cys123, Cys124, Cys206, and Cys209. Residue Cys232 is the Nucleophile; cysteine thiosulfonate intermediate of the active site.

It belongs to the PAPS reductase family. CysH subfamily. Requires [4Fe-4S] cluster as cofactor.

The protein resides in the cytoplasm. It catalyses the reaction [thioredoxin]-disulfide + sulfite + AMP + 2 H(+) = adenosine 5'-phosphosulfate + [thioredoxin]-dithiol. Its pathway is sulfur metabolism; hydrogen sulfide biosynthesis; sulfite from sulfate. In terms of biological role, catalyzes the formation of sulfite from adenosine 5'-phosphosulfate (APS) using thioredoxin as an electron donor. This Mycobacteroides abscessus (strain ATCC 19977 / DSM 44196 / CCUG 20993 / CIP 104536 / JCM 13569 / NCTC 13031 / TMC 1543 / L948) (Mycobacterium abscessus) protein is Adenosine 5'-phosphosulfate reductase.